The following is a 669-amino-acid chain: Acyl-coenzyme A oxidase 1 (669 aa).

2 residues coordinate FAD: T152 and G191. E434 (proton acceptor) is an active-site residue. At Y544 the chain carries Phosphotyrosine. Position 551 is a phosphoserine (S551). The Microbody targeting signal signature appears at 667-669 (AHL).

The protein belongs to the acyl-CoA oxidase family. As to quaternary structure, homodimer. FAD is required as a cofactor. In terms of tissue distribution, expressed in glia.

It is found in the peroxisome. The protein resides in the nucleus. The catalysed reaction is a 2,3-saturated acyl-CoA + O2 = a (2E)-enoyl-CoA + H2O2. It functions in the pathway lipid metabolism; peroxisomal fatty acid beta-oxidation. Its function is as follows. Catalyzes the desaturation of acyl-CoAs to 2-trans-enoyl-CoAs. First enzyme of the fatty acid beta-oxidation pathway. The polypeptide is Acyl-coenzyme A oxidase 1 (Drosophila melanogaster (Fruit fly)).